Here is a 1003-residue protein sequence, read N- to C-terminus: Translation initiation factor IF-2 (1003 aa).

Composition is skewed to basic and acidic residues over residues 61-74 (EKFS…DRNK), 139-169 (PVVE…KKPE), 180-206 (LEEK…KETP), 219-229 (VFKIRPTEFKS), and 252-290 (SKEE…DKIS). 2 disordered regions span residues 61-81 (EKFS…SIEG) and 135-362 (PKAE…KDRF). Over residues 315-350 (NAAGTTNAGGASNNNQRNDNANRPNRNNNSKPNGNN) the composition is skewed to low complexity. The region spanning 502–672 (PRAPIVTVMG…LLEAEMLDLK (171 aa)) is the tr-type G domain. A G1 region spans residues 511–518 (GHVDHGKT). 511–518 (GHVDHGKT) contributes to the GTP binding site. Residues 536-540 (GITQH) form a G2 region. The tract at residues 558–561 (DTPG) is G3. GTP-binding positions include 558–562 (DTPGH) and 612–615 (NKVD). The G4 stretch occupies residues 612–615 (NKVD). The tract at residues 648–650 (SAK) is G5.

This sequence belongs to the TRAFAC class translation factor GTPase superfamily. Classic translation factor GTPase family. IF-2 subfamily.

It is found in the cytoplasm. Its function is as follows. One of the essential components for the initiation of protein synthesis. Protects formylmethionyl-tRNA from spontaneous hydrolysis and promotes its binding to the 30S ribosomal subunits. Also involved in the hydrolysis of GTP during the formation of the 70S ribosomal complex. This is Translation initiation factor IF-2 from Phocaeicola vulgatus (strain ATCC 8482 / DSM 1447 / JCM 5826 / CCUG 4940 / NBRC 14291 / NCTC 11154) (Bacteroides vulgatus).